We begin with the raw amino-acid sequence, 107 residues long: Histone H4 (107 aa).

A compositionally biased stretch (gly residues) spans 1–16 (MPGRGKGGKGGKGYGK). The segment at 1–23 (MPGRGKGGKGGKGYGKVGAKRHA) is disordered. A DNA-binding region spans residues 17–21 (VGAKR).

It belongs to the histone H4 family. In terms of assembly, the nucleosome is a histone octamer containing two molecules each of H2A, H2B, H3 and H4 assembled in one H3-H4 heterotetramer and two H2A-H2B heterodimers. The octamer wraps approximately 147 bp of DNA.

It localises to the nucleus. Its subcellular location is the chromosome. Functionally, core component of nucleosome. Nucleosomes wrap and compact DNA into chromatin, limiting DNA accessibility to the cellular machineries which require DNA as a template. Histones thereby play a central role in transcription regulation, DNA repair, DNA replication and chromosomal stability. DNA accessibility is regulated via a complex set of post-translational modifications of histones, also called histone code, and nucleosome remodeling. The sequence is that of Histone H4 from Euplotes crassus.